The chain runs to 217 residues: NAD(P)H-quinone oxidoreductase subunit M, chloroplastic (217 aa).

The transit peptide at 1–21 directs the protein to the chloroplast; the sequence is MVAAFSYTACTKLSLLHPSMV. The disordered stretch occupies residues 48–67; it reads ETETLKEEQSTEKMKKQPTP. The span at 50–62 shows a compositional bias: basic and acidic residues; it reads ETLKEEQSTEKMK.

The protein belongs to the NDH complex subunit M family. As to quaternary structure, part of the chloroplast NDH complex, composed of a mixture of chloroplast and nucleus encoded subunits. Component of the NDH subcomplex A, at least composed of ndhH, ndhI, ndhJ, ndhK, ndhL, ndhM, ndhN and ndhO.

The protein resides in the plastid. Its subcellular location is the chloroplast thylakoid membrane. The catalysed reaction is a plastoquinone + NADH + (n+1) H(+)(in) = a plastoquinol + NAD(+) + n H(+)(out). The enzyme catalyses a plastoquinone + NADPH + (n+1) H(+)(in) = a plastoquinol + NADP(+) + n H(+)(out). Its function is as follows. NDH shuttles electrons from NAD(P)H:plastoquinone, via FMN and iron-sulfur (Fe-S) centers, to quinones in the photosynthetic chain and possibly in a chloroplast respiratory chain. The immediate electron acceptor for the enzyme in this species is believed to be plastoquinone. Couples the redox reaction to proton translocation, and thus conserves the redox energy in a proton gradient. In Arabidopsis thaliana (Mouse-ear cress), this protein is NAD(P)H-quinone oxidoreductase subunit M, chloroplastic.